The sequence spans 282 residues: Tumor necrosis factor ligand superfamily member 6 (282 aa).

The Cytoplasmic portion of the chain corresponds to 1 to 82; that stretch reads MQQPFNYPYP…KKKRDHNAGL (82 aa). Residues 30–73 are disordered; that stretch reads FPCPASVPGRPGQRRPPPPPPPPPPPPTLLPSRPLPPLPPPSLK. Pro residues predominate over residues 43–71; sequence RRPPPPPPPPPPPPTLLPSRPLPPLPPPS. A helical; Signal-anchor for type II membrane protein membrane pass occupies residues 83 to 103; the sequence is CLLVMFFMVLVALVGLGLGMF. At 104–282 the chain is on the extracellular side; that stretch reads QLFHLQKELT…SKTFFGLYKL (179 aa). Residues 119–132 are compositionally biased toward basic and acidic residues; it reads ASQRHTESSLEKQI. A disordered region spans residues 119-140; that stretch reads ASQRHTESSLEKQIGHPNLPSE. One can recognise a THD domain in the interval 146-282; that stretch reads KVAHLTGKPN…SKTFFGLYKL (137 aa). Residue asparagine 185 is glycosylated (N-linked (GlcNAc...) asparagine). Cysteine 203 and cysteine 234 form a disulfide bridge. N-linked (GlcNAc...) asparagine glycosylation is found at asparagine 251 and asparagine 261.

The protein belongs to the tumor necrosis factor family. As to quaternary structure, homotrimer. Interacts with ARHGAP9, BAIAP2L1, BTK, CACNB3, CACNB4, CRK, DLG2, DNMBP, DOCK4, EPS8L3, FGR, FYB1, FYN, HCK, ITK, ITSN2, KALRN, LYN, MACC1, MIA, MPP4, MYO15A, NCF1, NCK1, NCK2, NCKIPSD, OSTF1, PIK3R1, PSTPIP1, RIMBP3C, SAMSN1, SH3GL3, SH3PXD2B, SH3PXD2A, SH3RF2, SKAP2, SNX33, SNX9, SORBS3, SPTA1, SRC, SRGAP1, SRGAP2, SRGAP3, TEC, TJP3 and YES1. Post-translationally, the soluble form derives from the membrane form by proteolytic processing. The membrane-bound form undergoes two successive intramembrane proteolytic cleavages. The first one is processed by ADAM10 producing an N-terminal fragment, which lacks the receptor-binding extracellular domain. This ADAM10-processed FasL (FasL APL) remnant form is still membrane anchored and further processed by SPPL2A that liberates the FasL intracellular domain (FasL ICD). FasL shedding by ADAM10 is a prerequisite for subsequent intramembrane cleavage by SPPL2A in T-cells. In terms of processing, phosphorylated by FGR on tyrosine residues; this is required for ubiquitination and subsequent internalization. N-glycosylated. Glycosylation enhances apoptotic activity. Post-translationally, monoubiquitinated.

The protein resides in the cell membrane. It localises to the cytoplasmic vesicle lumen. The protein localises to the lysosome lumen. It is found in the secreted. Its subcellular location is the nucleus. Its function is as follows. Cytokine that binds to TNFRSF6/FAS, a receptor that transduces the apoptotic signal into cells. Involved in cytotoxic T-cell-mediated apoptosis, natural killer cell-mediated apoptosis and in T-cell development. Initiates fratricidal/suicidal activation-induced cell death (AICD) in antigen-activated T-cells contributing to the termination of immune responses. TNFRSF6/FAS-mediated apoptosis also has a role in the induction of peripheral tolerance. Binds to TNFRSF6B/DcR3, a decoy receptor that blocks apoptosis. In terms of biological role, induces FAS-mediated activation of NF-kappa-B, initiating non-apoptotic signaling pathways. Can induce apoptosis but does not appear to be essential for this process. Functionally, cytoplasmic form induces gene transcription inhibition. The protein is Tumor necrosis factor ligand superfamily member 6 (FASLG) of Sus scrofa (Pig).